The primary structure comprises 363 residues: MQCVWTLSLLQLVALWANAAVLTENGLPILWDQAPSQLSDLPQADDVVTINPWNSLQRMSLYRILVGSTDKYMASMGTNDSASPLWGLPLQLAWKVRSGRLVDPTGATTCGQEGDPMCISTNSWWACVNYYLSVIPFLAAVQKGLIGDGLIQVQVQAPAEAAEDSCTSYTDCSAKYPDLMAKWEEFFQTLKDVSASEISDFEKRDQILGAFWAGETLSLNTASSSCKAKMSYYSSPEVAFAKSWMNAADYVAAAYFQSSLNNSVLFMGPLPSRVLQEGDSAPNIADLSTEENHTLYIFGWMNRMNTILLGSPVKMWRSAMCSDKAREKGRELLQNLILDPKFAVSTFVSILTEMTRSCTGLST.

An N-terminal signal peptide occupies residues 1–19 (MQCVWTLSLLQLVALWANA). Asn-79, Asn-261, and Asn-292 each carry an N-linked (GlcNAc...) asparagine glycan.

The protein belongs to the LEG1 family.

The protein localises to the secreted. May be involved in early liver development. In Oncorhynchus mykiss (Rainbow trout), this protein is Protein LEG1 homolog.